Here is a 239-residue protein sequence, read N- to C-terminus: Phosphoribosylaminoimidazole-succinocarboxamide synthase (239 aa).

The protein belongs to the SAICAR synthetase family.

The catalysed reaction is 5-amino-1-(5-phospho-D-ribosyl)imidazole-4-carboxylate + L-aspartate + ATP = (2S)-2-[5-amino-1-(5-phospho-beta-D-ribosyl)imidazole-4-carboxamido]succinate + ADP + phosphate + 2 H(+). The protein operates within purine metabolism; IMP biosynthesis via de novo pathway; 5-amino-1-(5-phospho-D-ribosyl)imidazole-4-carboxamide from 5-amino-1-(5-phospho-D-ribosyl)imidazole-4-carboxylate: step 1/2. The chain is Phosphoribosylaminoimidazole-succinocarboxamide synthase from Nitratiruptor sp. (strain SB155-2).